A 74-amino-acid polypeptide reads, in one-letter code: Conotoxin VnMEKL-0222 (74 aa).

The N-terminal stretch at 1–19 (MEKLTILLLVAAVLMSTQA) is a signal peptide. A propeptide spanning residues 20–46 (LIQEKRPKEKIKFLSKRKSIPESWWEG) is cleaved from the precursor. 3 cysteine pairs are disulfide-bonded: Cys-48/Cys-62, Cys-55/Cys-66, and Cys-61/Cys-71.

It belongs to the conotoxin O2 superfamily. In terms of tissue distribution, expressed by the venom duct.

It localises to the secreted. The chain is Conotoxin VnMEKL-0222 from Conus ventricosus (Mediterranean cone).